A 470-amino-acid polypeptide reads, in one-letter code: ATP synthase subunit beta (470 aa).

151 to 158 (GGAGVGKT) is an ATP binding site.

The protein belongs to the ATPase alpha/beta chains family. As to quaternary structure, F-type ATPases have 2 components, CF(1) - the catalytic core - and CF(0) - the membrane proton channel. CF(1) has five subunits: alpha(3), beta(3), gamma(1), delta(1), epsilon(1). CF(0) has three main subunits: a(1), b(2) and c(9-12). The alpha and beta chains form an alternating ring which encloses part of the gamma chain. CF(1) is attached to CF(0) by a central stalk formed by the gamma and epsilon chains, while a peripheral stalk is formed by the delta and b chains.

The protein resides in the cell membrane. It catalyses the reaction ATP + H2O + 4 H(+)(in) = ADP + phosphate + 5 H(+)(out). In terms of biological role, produces ATP from ADP in the presence of a proton gradient across the membrane. The catalytic sites are hosted primarily by the beta subunits. This Mycoplasma mobile (strain ATCC 43663 / 163K / NCTC 11711) (Mesomycoplasma mobile) protein is ATP synthase subunit beta.